We begin with the raw amino-acid sequence, 546 residues long: Hydroxylamine reductase (546 aa).

Residues Cys-3, Cys-6, Cys-18, and Cys-25 each contribute to the [4Fe-4S] cluster site. Residues His-245, Glu-269, Cys-313, Cys-401, Cys-429, Cys-454, Glu-488, and Lys-490 each contribute to the hybrid [4Fe-2O-2S] cluster site. Cys-401 bears the Cysteine persulfide mark.

This sequence belongs to the HCP family. [4Fe-4S] cluster serves as cofactor. It depends on hybrid [4Fe-2O-2S] cluster as a cofactor.

The protein resides in the cytoplasm. The enzyme catalyses A + NH4(+) + H2O = hydroxylamine + AH2 + H(+). Its activity is regulated as follows. Inhibited by cyanide and by sulfide and iron reagents such as dithioerythritol, 2,2'-dipyridyl and o-phenanthroline. In terms of biological role, could be involved in assimilation and/or detoxification of hydroxylamine, which is a toxic compound that may be formed during nitrate/nitrite assimilation. Catalyzes the reduction of hydroxylamine to form NH(3) and H(2)O. It has a low reductase activity with FAD, FMN, benzyl viologen and bromphenol blue as electrons donors, but it is not able to use NAD or NADP. This chain is Hydroxylamine reductase, found in Rhodobacter capsulatus (Rhodopseudomonas capsulata).